A 738-amino-acid polypeptide reads, in one-letter code: Catalase-peroxidase (738 aa).

The tract at residues 1–24 (MSEEHPPIAEANSQPSNGCPVAGG) is disordered. Positions 108–231 (WHAAGTYRVG…LAAVQMGLIY (124 aa)) form a cross-link, tryptophyl-tyrosyl-methioninium (Trp-Tyr) (with M-257). Histidine 109 functions as the Proton acceptor in the catalytic mechanism. The tryptophyl-tyrosyl-methioninium (Tyr-Met) (with W-108) cross-link spans 231–257 (YVNPEGPNGNPDPLAAAIDIRETFGRM). Heme b is bound at residue histidine 272.

This sequence belongs to the peroxidase family. Peroxidase/catalase subfamily. In terms of assembly, homodimer or homotetramer. Heme b serves as cofactor. In terms of processing, formation of the three residue Trp-Tyr-Met cross-link is important for the catalase, but not the peroxidase activity of the enzyme.

The catalysed reaction is H2O2 + AH2 = A + 2 H2O. The enzyme catalyses 2 H2O2 = O2 + 2 H2O. Bifunctional enzyme with both catalase and broad-spectrum peroxidase activity. This chain is Catalase-peroxidase, found in Mycobacteroides abscessus (strain ATCC 19977 / DSM 44196 / CCUG 20993 / CIP 104536 / JCM 13569 / NCTC 13031 / TMC 1543 / L948) (Mycobacterium abscessus).